Here is a 211-residue protein sequence, read N- to C-terminus: ATP phosphoribosyltransferase (211 aa).

The protein belongs to the ATP phosphoribosyltransferase family. Short subfamily. Heteromultimer composed of HisG and HisZ subunits.

It localises to the cytoplasm. The catalysed reaction is 1-(5-phospho-beta-D-ribosyl)-ATP + diphosphate = 5-phospho-alpha-D-ribose 1-diphosphate + ATP. The protein operates within amino-acid biosynthesis; L-histidine biosynthesis; L-histidine from 5-phospho-alpha-D-ribose 1-diphosphate: step 1/9. Catalyzes the condensation of ATP and 5-phosphoribose 1-diphosphate to form N'-(5'-phosphoribosyl)-ATP (PR-ATP). Has a crucial role in the pathway because the rate of histidine biosynthesis seems to be controlled primarily by regulation of HisG enzymatic activity. The polypeptide is ATP phosphoribosyltransferase (Sorangium cellulosum (strain So ce56) (Polyangium cellulosum (strain So ce56))).